A 161-amino-acid chain; its full sequence is Large ribosomal subunit protein uL15 (161 aa).

Residues 1–43 (MKLSDIADNAGARKKRMRVGRGIGSGKGKTSGRGGKGQTARSG) are disordered. The segment covering 21-37 (RGIGSGKGKTSGRGGKG) has biased composition (gly residues).

Belongs to the universal ribosomal protein uL15 family. In terms of assembly, part of the 50S ribosomal subunit.

Functionally, binds to the 23S rRNA. The protein is Large ribosomal subunit protein uL15 of Bradyrhizobium sp. (strain BTAi1 / ATCC BAA-1182).